A 524-amino-acid polypeptide reads, in one-letter code: Zinc finger CCCH domain-containing protein 37 (524 aa).

Residues 19–39 (ASTVSPAPPPPQQPLPPKTGL) are disordered. The span at 24-35 (PAPPPPQQPLPP) shows a compositional bias: pro residues. C3H1-type zinc fingers lie at residues 174 to 202 (RAGE…HPIW), 225 to 253 (RPGE…HPRE), and 268 to 296 (RPSE…HPKD). The disordered stretch occupies residues 300–319 (PSSSQDIGSSVGLTSEPDAT). C3H1-type zinc fingers lie at residues 340-368 (RSGE…HPER), 420-448 (RPGQ…HPAD), and 473-501 (REGA…HPPP). Residues 505–524 (MAKTTSEADAAGATNTDTTQ) are disordered. The span at 512 to 524 (ADAAGATNTDTTQ) shows a compositional bias: low complexity.

As to quaternary structure, interacts with HEN4. Interacts with FLK and PEP. As to expression, highly expressed in inflorescences, at intermediate levels in leaves and stems and at lower levels in roots.

Its subcellular location is the nucleus speckle. Its function is as follows. Involved in flower development. Functions in floral reproductive organ identity by binding AGAMOUS (AG) pre-mRNA and promoting its processing. Functions in association with HUA2 and HEN4. The polypeptide is Zinc finger CCCH domain-containing protein 37 (HUA1) (Arabidopsis thaliana (Mouse-ear cress)).